The chain runs to 121 residues: Small ribosomal subunit protein uS13 (121 aa).

Residues 93 to 121 form a disordered region; sequence RGLPVRGQNTKNNARTRKGPRRTVANKKK. Residues 106-121 show a composition bias toward basic residues; that stretch reads ARTRKGPRRTVANKKK.

The protein belongs to the universal ribosomal protein uS13 family. As to quaternary structure, part of the 30S ribosomal subunit. Forms a loose heterodimer with protein S19. Forms two bridges to the 50S subunit in the 70S ribosome.

Functionally, located at the top of the head of the 30S subunit, it contacts several helices of the 16S rRNA. In the 70S ribosome it contacts the 23S rRNA (bridge B1a) and protein L5 of the 50S subunit (bridge B1b), connecting the 2 subunits; these bridges are implicated in subunit movement. Contacts the tRNAs in the A and P-sites. The sequence is that of Small ribosomal subunit protein uS13 from Bacillus pumilus (strain SAFR-032).